The primary structure comprises 55 residues: UPF0391 membrane protein NE1120 (55 aa).

2 helical membrane-spanning segments follow: residues 4–24 and 27–47; these read MALVFFLIAVLAGILGFAGIA and LAWAAKVLFFAGLILTVVFYL.

It belongs to the UPF0391 family.

The protein localises to the cell membrane. This chain is UPF0391 membrane protein NE1120, found in Nitrosomonas europaea (strain ATCC 19718 / CIP 103999 / KCTC 2705 / NBRC 14298).